The sequence spans 128 residues: Large ribosomal subunit protein bL12 (128 aa).

Belongs to the bacterial ribosomal protein bL12 family. As to quaternary structure, homodimer. Part of the ribosomal stalk of the 50S ribosomal subunit. Forms a multimeric L10(L12)X complex, where L10 forms an elongated spine to which 2 to 4 L12 dimers bind in a sequential fashion. Binds GTP-bound translation factors.

Functionally, forms part of the ribosomal stalk which helps the ribosome interact with GTP-bound translation factors. Is thus essential for accurate translation. The sequence is that of Large ribosomal subunit protein bL12 from Phenylobacterium zucineum (strain HLK1).